The following is a 349-amino-acid chain: tRNA pseudouridine synthase D (349 aa).

F27 contributes to the substrate binding site. The Nucleophile role is filled by D80. N129 lines the substrate pocket. One can recognise a TRUD domain in the interval 155–303 (GVPNYFGAQR…VEAARRAMLL (149 aa)). Substrate is bound at residue F329.

It belongs to the pseudouridine synthase TruD family.

The enzyme catalyses uridine(13) in tRNA = pseudouridine(13) in tRNA. In terms of biological role, responsible for synthesis of pseudouridine from uracil-13 in transfer RNAs. This is tRNA pseudouridine synthase D from Citrobacter koseri (strain ATCC BAA-895 / CDC 4225-83 / SGSC4696).